The chain runs to 122 residues: Large ribosomal subunit protein uL18 (122 aa).

It belongs to the universal ribosomal protein uL18 family. Part of the 50S ribosomal subunit; part of the 5S rRNA/L5/L18/L25 subcomplex. Contacts the 5S and 23S rRNAs.

Functionally, this is one of the proteins that bind and probably mediate the attachment of the 5S RNA into the large ribosomal subunit, where it forms part of the central protuberance. The protein is Large ribosomal subunit protein uL18 of Desulfitobacterium hafniense (strain DSM 10664 / DCB-2).